The chain runs to 410 residues: Dipeptidase 1 (410 aa).

An N-terminal signal peptide occupies residues 1–16; the sequence is MWTGWWLWPLVAVCTA. Zn(2+) is bound by residues His36 and Asp38. N-linked (GlcNAc...) asparagine glycans are attached at residues Asn57 and Asn62. An intrachain disulfide couples Cys87 to Cys170. Glu141 contributes to the Zn(2+) binding site. His168 serves as a coordination point for substrate. Zn(2+)-binding residues include His214 and His235. A disulfide bridge connects residues Cys242 and Cys274. A substrate-binding site is contributed by Arg246. N-linked (GlcNAc...) asparagine glycosylation is present at Asn279. Residue Asp304 participates in substrate binding. A lipid anchor (GPI-anchor amidated serine) is attached at Ser384. Positions 385–410 are cleaved as a propeptide — removed in mature form; the sequence is GAPSLHLQPGTLLASLVTLLLSLCLL.

Belongs to the metallo-dependent hydrolases superfamily. Peptidase M19 family. As to quaternary structure, homodimer; disulfide-linked. The cofactor is Zn(2+).

It is found in the apical cell membrane. The catalysed reaction is an L-aminoacyl-L-amino acid + H2O = 2 an L-alpha-amino acid. It carries out the reaction leukotriene D4 + H2O = leukotriene E4 + glycine. The enzyme catalyses L-cystine-bis-glycine + 2 H2O = L-cystine + 2 glycine. It catalyses the reaction a beta-lactam + H2O = a substituted beta-amino acid. The catalysed reaction is glycyldehydrophenylalanine + H2O = 2,3-didehydrophenylalanine + glycine. Inhibited by L-penicillamine. Inhibited by cilastatin. In terms of biological role, hydrolyzes a wide range of dipeptides including the conversion of leukotriene D4 to leukotriene E4. Hydrolyzes cystinyl-bis-glycine (cys-bis-gly) formed during glutathione degradation. Also possesses beta lactamase activity and hydrolytically inactivates beta-lactam antibiotics. Functionally, independently of its dipeptidase activity, acts as an adhesion receptor for neutrophil recruitment from bloodstream into inflamed lungs and liver. The chain is Dipeptidase 1 (DPEP1) from Bos taurus (Bovine).